We begin with the raw amino-acid sequence, 657 residues long: N-acetylgalactosaminyltransferase 7 (657 aa).

At 1–6 the chain is on the cytoplasmic side; the sequence is MRLKIG. Residues 7–29 traverse the membrane as a helical; Signal-anchor for type II membrane protein segment; it reads FILRSLLVVGSFLGLVVLWSSLT. At 30–657 the chain is on the lumenal side; sequence PRPDDPSPLS…KWEMNNIHSV (628 aa). The segment at 31-66 is disordered; that stretch reads RPDDPSPLSRMREDRDVNDPMPNRGGNGLAPGEDRF. 5 cysteine pairs are disulfide-bonded: cysteine 197-cysteine 435, cysteine 426-cysteine 507, cysteine 545-cysteine 562, cysteine 585-cysteine 600, and cysteine 625-cysteine 640. Positions 206–317 are catalytic subdomain A; the sequence is LLTSSVVIVF…VNWYAPLVAP (112 aa). Substrate contacts are provided by aspartate 247 and arginine 277. Aspartate 301 and histidine 303 together coordinate Mn(2+). The interval 381-443 is catalytic subdomain B; it reads PYRSPAMAGG…PCSRVGHIYR (63 aa). Position 412 (tryptophan 412) interacts with substrate. Histidine 440 provides a ligand contact to Mn(2+). Residue arginine 443 participates in substrate binding. One can recognise a Ricin B-type lectin domain in the interval 532–652; the sequence is VDWGEIRGFE…SKTTQKWEMN (121 aa).

The protein belongs to the glycosyltransferase 2 family. GalNAc-T subfamily. It depends on Mn(2+) as a cofactor.

It localises to the golgi apparatus membrane. The enzyme catalyses L-seryl-[protein] + UDP-N-acetyl-alpha-D-galactosamine = a 3-O-[N-acetyl-alpha-D-galactosaminyl]-L-seryl-[protein] + UDP + H(+). It carries out the reaction L-threonyl-[protein] + UDP-N-acetyl-alpha-D-galactosamine = a 3-O-[N-acetyl-alpha-D-galactosaminyl]-L-threonyl-[protein] + UDP + H(+). Its pathway is protein modification; protein glycosylation. In terms of biological role, glycopeptide transferase involved in O-linked oligosaccharide biosynthesis, which catalyzes the transfer of an N-acetyl-D-galactosamine residue to an already glycosylated peptide. In contrast to other proteins of the family, it does not act as a peptide transferase that transfers GalNAc onto serine or threonine residue on the protein receptor, but instead requires the prior addition of a GalNAc on a peptide before adding additional GalNAc moieties. Some peptide transferase activity is however not excluded, considering that its appropriate peptide substrate may remain unidentified. The protein is N-acetylgalactosaminyltransferase 7 (GALNT7) of Pongo abelii (Sumatran orangutan).